The chain runs to 463 residues: Cysteine--tRNA ligase (463 aa).

Cys-29 contributes to the Zn(2+) binding site. Positions 31 to 41 (PTVYDFAHIGN) match the 'HIGH' region motif. 3 residues coordinate Zn(2+): Cys-227, His-252, and Glu-256. The 'KMSKS' region signature appears at 285–289 (KMSKS). Lys-288 is an ATP binding site.

Belongs to the class-I aminoacyl-tRNA synthetase family. As to quaternary structure, monomer. Zn(2+) is required as a cofactor.

It localises to the cytoplasm. It catalyses the reaction tRNA(Cys) + L-cysteine + ATP = L-cysteinyl-tRNA(Cys) + AMP + diphosphate. The protein is Cysteine--tRNA ligase of Rhodopseudomonas palustris (strain BisA53).